Consider the following 414-residue polypeptide: Serine hydroxymethyltransferase (414 aa).

(6S)-5,6,7,8-tetrahydrofolate-binding positions include leucine 121 and 125 to 127 (GHL). Lysine 229 is subject to N6-(pyridoxal phosphate)lysine.

It belongs to the SHMT family. As to quaternary structure, homodimer. Pyridoxal 5'-phosphate is required as a cofactor.

It is found in the cytoplasm. The enzyme catalyses (6R)-5,10-methylene-5,6,7,8-tetrahydrofolate + glycine + H2O = (6S)-5,6,7,8-tetrahydrofolate + L-serine. It functions in the pathway one-carbon metabolism; tetrahydrofolate interconversion. The protein operates within amino-acid biosynthesis; glycine biosynthesis; glycine from L-serine: step 1/1. Catalyzes the reversible interconversion of serine and glycine with tetrahydrofolate (THF) serving as the one-carbon carrier. This reaction serves as the major source of one-carbon groups required for the biosynthesis of purines, thymidylate, methionine, and other important biomolecules. Also exhibits THF-independent aldolase activity toward beta-hydroxyamino acids, producing glycine and aldehydes, via a retro-aldol mechanism. The chain is Serine hydroxymethyltransferase from Polaromonas naphthalenivorans (strain CJ2).